The following is a 273-amino-acid chain: Putative expansin-B2 (273 aa).

The signal sequence occupies residues 1 to 29 (MTILVVDRYYMLMNLLFALTCLLLNLTHC). The N-linked (GlcNAc...) asparagine glycan is linked to Asn36. In terms of domain architecture, Expansin-like EG45 spans 65-173 (GGACGYGNAV…KKVECNYIGK (109 aa)). 3 disulfides stabilise this stretch: Cys68-Cys97, Cys100-Cys168, and Cys105-Cys111. Residues 186–269 (NSFAVLVAYV…NWQPGAIYKS (84 aa)) enclose the Expansin-like CBD domain.

The protein belongs to the expansin family. Expansin B subfamily.

The protein resides in the secreted. It is found in the cell wall. It localises to the membrane. In terms of biological role, may cause loosening and extension of plant cell walls by disrupting non-covalent bonding between cellulose microfibrils and matrix glucans. No enzymatic activity has been found. The sequence is that of Putative expansin-B2 (EXPB2) from Arabidopsis thaliana (Mouse-ear cress).